The following is a 208-amino-acid chain: ATP synthase subunit b 1 (208 aa).

Residues 1-18 are compositionally biased toward polar residues; sequence MFVSTAFAQTATESQPAS. The disordered stretch occupies residues 1 to 26; the sequence is MFVSTAFAQTATESQPASTAGEHGAA. The helical transmembrane segment at 56-78 threads the bilayer; the sequence is SQVLWLAITFGLFYLFLSRVVLP.

It belongs to the ATPase B chain family. In terms of assembly, F-type ATPases have 2 components, F(1) - the catalytic core - and F(0) - the membrane proton channel. F(1) has five subunits: alpha(3), beta(3), gamma(1), delta(1), epsilon(1). F(0) has three main subunits: a(1), b(2) and c(10-14). The alpha and beta chains form an alternating ring which encloses part of the gamma chain. F(1) is attached to F(0) by a central stalk formed by the gamma and epsilon chains, while a peripheral stalk is formed by the delta and b chains.

It localises to the cell inner membrane. F(1)F(0) ATP synthase produces ATP from ADP in the presence of a proton or sodium gradient. F-type ATPases consist of two structural domains, F(1) containing the extramembraneous catalytic core and F(0) containing the membrane proton channel, linked together by a central stalk and a peripheral stalk. During catalysis, ATP synthesis in the catalytic domain of F(1) is coupled via a rotary mechanism of the central stalk subunits to proton translocation. Its function is as follows. Component of the F(0) channel, it forms part of the peripheral stalk, linking F(1) to F(0). The sequence is that of ATP synthase subunit b 1 from Brucella abortus (strain 2308).